A 311-amino-acid chain; its full sequence is Tricarboxylate transport protein, mitochondrial (311 aa).

A propeptide spans 1–13 (MAAPRGPRALSAA) (removed in mature form). The tract at residues 1–21 (MAAPRGPRALSAAAPGSGKPK) is disordered. 3 Solcar repeats span residues 23–111 (THPG…LSNH), 122–208 (RRGL…LRNW), and 218–303 (MNPL…VVKL). A run of 3 helical transmembrane segments spans residues 29-46 (ILAG…TFPT), 86-105 (GLSS…FGMF), and 129-143 (LGAG…VCPM). Ser-156 is modified (phosphoserine). 3 helical membrane-spanning segments follow: residues 183 to 202 (GLTA…FFVM), 224 to 241 (GVFG…NTPL), and 278 to 297 (GTVP…FIIY).

The protein belongs to the mitochondrial carrier (TC 2.A.29) family. Post-translationally, possesses a short cleavable presequence, which, however, is found to be dispensable both for targeting to mitochondria and insertion into the inner membrane. However, the presequence is required to keep SLC25A1 in a soluble state and thus in an import-competent state. Mature SLC25A1 lacking the presequence is prone to aggregation. Expressed minimally but ubiquitously throughout the adult brain. Detected at higher levels in the olfactory bulb, neocortex and cerebellum. Also expressed in a subset of large cells in the globus pallidus.

It is found in the mitochondrion inner membrane. Its subcellular location is the mitochondrion membrane. The catalysed reaction is (S)-malate(in) + citrate(out) = (S)-malate(out) + citrate(in). It catalyses the reaction D-threo-isocitrate(in) + citrate(out) = D-threo-isocitrate(out) + citrate(in). It carries out the reaction citrate(out) + succinate(in) = citrate(in) + succinate(out). The enzyme catalyses cis-aconitate(in) + citrate(out) = cis-aconitate(out) + citrate(in). The catalysed reaction is trans-aconitate(in) + citrate(out) = trans-aconitate(out) + citrate(in). It catalyses the reaction phosphoenolpyruvate(in) + citrate(out) = phosphoenolpyruvate(out) + citrate(in). It carries out the reaction maleate(in) + citrate(out) = maleate(out) + citrate(in). In terms of biological role, mitochondrial electroneutral antiporter that exports citrate from the mitochondria into the cytosol in exchange for malate. Also able to mediate the exchange of citrate for isocitrate, phosphoenolpyruvate, cis-aconitate and to a lesser extent trans-aconitate, maleate and succinate. In the cytoplasm, citrate plays important roles in fatty acid and sterol synthesis, regulation of glycolysis, protein acetylation, and other physiopathological processes. The chain is Tricarboxylate transport protein, mitochondrial from Mus musculus (Mouse).